Here is a 691-residue protein sequence, read N- to C-terminus: Solute carrier organic anion transporter family member 1B1 (691 aa).

The Cytoplasmic portion of the chain corresponds to methionine 1–lysine 28. Residues methionine 29–methionine 48 traverse the membrane as a helical segment. The Extracellular segment spans residues lysine 49 to glycine 67. The helical transmembrane segment at phenylalanine 68–glycine 88 threads the bilayer. The Cytoplasmic portion of the chain corresponds to serine 89 to proline 94. A helical transmembrane segment spans residues lysine 95–glycine 119. The Extracellular portion of the chain corresponds to tyrosine 120 to serine 168. N-linked (GlcNAc...) asparagine glycans are attached at residues asparagine 130 and asparagine 134. The helical transmembrane segment at tyrosine 169–aspartate 197 threads the bilayer. Residues aspartate 198 to alanine 216 are Cytoplasmic-facing. The helical transmembrane segment at methionine 217 to isoleucine 237 threads the bilayer. Residues glycine 238 to valine 255 lie on the Extracellular side of the membrane. Residues glycine 256 to proline 280 form a helical membrane-spanning segment. The Cytoplasmic segment spans residues glutamine 281 to serine 331. 2 positions are modified to phosphoserine: serine 293 and serine 295. The chain crosses the membrane as a helical span at residues isoleucine 332–isoleucine 353. Topologically, residues glycine 354–lysine 373 are extracellular. Residues alanine 374–isoleucine 397 form a helical membrane-spanning segment. Over lysine 398–lysine 401 the chain is Cytoplasmic. The helical transmembrane segment at leucine 402–tyrosine 425 threads the bilayer. The Extracellular segment spans residues phenylalanine 426–phenylalanine 537. Asparagine 432 carries an N-linked (GlcNAc...) asparagine glycan. One can recognise a Kazal-like domain in the interval aspartate 453–glutamate 508. Disulfide bonds link cysteine 459-cysteine 489, cysteine 465-cysteine 485, and cysteine 474-cysteine 506. 2 N-linked (GlcNAc...) asparagine glycosylation sites follow: asparagine 503 and asparagine 516. A helical transmembrane segment spans residues valine 538–valine 560. The Cytoplasmic segment spans residues lysine 561–serine 569. The chain crosses the membrane as a helical span at residues leucine 570–isoleucine 595. The Extracellular portion of the chain corresponds to aspartate 596–serine 629. The N-linked (GlcNAc...) asparagine glycan is linked to asparagine 617. Residues serine 630–methionine 647 traverse the membrane as a helical segment. Over lysine 648–cysteine 691 the chain is Cytoplasmic. 2 positions are modified to phosphoserine: serine 672 and serine 682.

It belongs to the organo anion transporter (TC 2.A.60) family. Highly expressed in liver, at the basolateral membranes of centrilobular hepatocytes. Expressed in liver (at protein level). Expressed in fetal liver. Not detected in heart, brain, placenta, lung, skeletal muscle, kidney, pancreas, spleen, thymus, prostate, testis, ovary, small intestine, colon and leukocyte. In testis, primarily localized to the basal membrane of Sertoli cells and weakly expressed in Leydig cells and within the tubules.

It is found in the basolateral cell membrane. The protein resides in the basal cell membrane. The enzyme catalyses taurocholate(out) = taurocholate(in). The catalysed reaction is dehydroepiandrosterone 3-sulfate(out) = dehydroepiandrosterone 3-sulfate(in). It catalyses the reaction estrone 3-sulfate(out) = estrone 3-sulfate(in). It carries out the reaction 3,3',5'-triiodo-L-thyronine(out) = 3,3',5'-triiodo-L-thyronine(in). The enzyme catalyses L-thyroxine(out) = L-thyroxine(in). The catalysed reaction is prostaglandin E2(out) = prostaglandin E2(in). It catalyses the reaction thromboxane B2(out) = thromboxane B2(in). It carries out the reaction 17beta-estradiol 17-O-(beta-D-glucuronate)(out) = 17beta-estradiol 17-O-(beta-D-glucuronate)(in). The enzyme catalyses leukotriene C4(out) = leukotriene C4(in). The catalysed reaction is leukotriene E4(out) = leukotriene E4(in). It catalyses the reaction (4E,15E)-bilirubin IXalpha C8-beta-D-glucuronoside(out) = (4E,15E)-bilirubin IXalpha C8-beta-D-glucuronoside(in). It carries out the reaction bilirubin IXalpha bis-beta-D-glucuronoside(out) = bilirubin IXalpha bis-beta-D-glucuronoside(in). Its function is as follows. Mediates the Na(+)-independent uptake of organic anions. Shows broad substrate specificity, can transport both organic anions such as bile acid taurocholate (cholyltaurine) and conjugated steroids (dehydroepiandrosterone 3-sulfate, 17-beta-glucuronosyl estradiol, and estrone 3-sulfate), as well as eicosanoids (prostaglandin E2, thromboxane B2, leukotriene C4, and leukotriene E4), and thyroid hormones (T4/L-thyroxine, and T3/3,3',5'-triiodo-L-thyronine). Can take up bilirubin glucuronides from plasma into the liver, contributing to the detoxification-enhancing liver-blood shuttling loop. Involved in the clearance of endogenous and exogenous substrates from the liver. Transports coproporphyrin I and III, by-products of heme synthesis, and may be involved in their hepatic disposition. May contribute to regulate the transport of organic compounds in testes across the blood-testis-barrier. Can transport HMG-CoA reductase inhibitors (also known as statins), such as pravastatin and pitavastatin, a clinically important class of hypolipidemic drugs. May play an important role in plasma and tissue distribution of the structurally diverse chemotherapeutic drug methotrexate. May also transport antihypertension agents, such as the angiotensin-converting enzyme (ACE) inhibitor prodrug enalapril, and the highly selective angiotensin II AT1-receptor antagonist valsartan, in the liver. Shows a pH-sensitive substrate specificity towards prostaglandin E2 and T4 which may be ascribed to the protonation state of the binding site and leads to a stimulation of substrate transport in an acidic microenvironment. Hydrogencarbonate/HCO3(-) acts as the probable counteranion that exchanges for organic anions. This Homo sapiens (Human) protein is Solute carrier organic anion transporter family member 1B1 (SLCO1B1).